Here is a 120-residue protein sequence, read N- to C-terminus: UPF0231 protein YacL (120 aa).

The protein belongs to the UPF0231 family.

This chain is UPF0231 protein YacL, found in Salmonella agona (strain SL483).